The chain runs to 86 residues: Conotoxin S6.10 (86 aa).

Residues 1–22 form the signal peptide; the sequence is MKLTCVLIIAVLFLTACQLATA. The propeptide occupies 23 to 45; it reads KTYSKGRQKHRALRSTDKNIKLT. 3 disulfide bridges follow: C48-C62, C55-C66, and C61-C73.

Belongs to the conotoxin O1 superfamily. In terms of tissue distribution, expressed by the venom duct.

Its subcellular location is the secreted. The protein is Conotoxin S6.10 of Conus striatus (Striated cone).